The primary structure comprises 268 residues: 4-diphosphocytidyl-2-C-methyl-D-erythritol kinase (268 aa).

Lys-9 is a catalytic residue. 88-98 provides a ligand contact to ATP; it reads PPGAGLGGGSS. Asp-130 is an active-site residue.

Belongs to the GHMP kinase family. IspE subfamily.

It catalyses the reaction 4-CDP-2-C-methyl-D-erythritol + ATP = 4-CDP-2-C-methyl-D-erythritol 2-phosphate + ADP + H(+). It functions in the pathway isoprenoid biosynthesis; isopentenyl diphosphate biosynthesis via DXP pathway; isopentenyl diphosphate from 1-deoxy-D-xylulose 5-phosphate: step 3/6. Functionally, catalyzes the phosphorylation of the position 2 hydroxy group of 4-diphosphocytidyl-2C-methyl-D-erythritol. This Aquifex aeolicus (strain VF5) protein is 4-diphosphocytidyl-2-C-methyl-D-erythritol kinase.